We begin with the raw amino-acid sequence, 388 residues long: Dual-specificity RNA methyltransferase RlmN (388 aa).

The active-site Proton acceptor is Glu-109. The 240-residue stretch at 115–354 (EEDRATLCVS…TIVRKTRGDD (240 aa)) folds into the Radical SAM core domain. Cys-122 and Cys-359 are joined by a disulfide. [4Fe-4S] cluster-binding residues include Cys-129, Cys-133, and Cys-136. S-adenosyl-L-methionine-binding positions include 183–184 (GE), Ser-215, 237–239 (SLH), and Asn-316. Cys-359 functions as the S-methylcysteine intermediate in the catalytic mechanism.

This sequence belongs to the radical SAM superfamily. RlmN family. Requires [4Fe-4S] cluster as cofactor.

It is found in the cytoplasm. The enzyme catalyses adenosine(2503) in 23S rRNA + 2 reduced [2Fe-2S]-[ferredoxin] + 2 S-adenosyl-L-methionine = 2-methyladenosine(2503) in 23S rRNA + 5'-deoxyadenosine + L-methionine + 2 oxidized [2Fe-2S]-[ferredoxin] + S-adenosyl-L-homocysteine. It catalyses the reaction adenosine(37) in tRNA + 2 reduced [2Fe-2S]-[ferredoxin] + 2 S-adenosyl-L-methionine = 2-methyladenosine(37) in tRNA + 5'-deoxyadenosine + L-methionine + 2 oxidized [2Fe-2S]-[ferredoxin] + S-adenosyl-L-homocysteine. In terms of biological role, specifically methylates position 2 of adenine 2503 in 23S rRNA and position 2 of adenine 37 in tRNAs. m2A2503 modification seems to play a crucial role in the proofreading step occurring at the peptidyl transferase center and thus would serve to optimize ribosomal fidelity. In Klebsiella pneumoniae subsp. pneumoniae (strain ATCC 700721 / MGH 78578), this protein is Dual-specificity RNA methyltransferase RlmN.